A 620-amino-acid chain; its full sequence is Guanylate cyclase soluble subunit beta-1 (620 aa).

H105 contributes to the heme binding site. Positions 421 to 554 (TILFSGIVGF…NTVNLTSRTE (134 aa)) constitute a Guanylate cyclase domain.

This sequence belongs to the adenylyl cyclase class-4/guanylyl cyclase family. In terms of assembly, the active enzyme is formed by a heterodimer of an alpha and a beta subunit. Heterodimer with GUCY1A1. Can also form inactive homodimers in vitro. Heme is required as a cofactor.

It localises to the cytoplasm. It carries out the reaction GTP = 3',5'-cyclic GMP + diphosphate. Activated by nitric oxide in the presence of magnesium or manganese ions. Its function is as follows. Mediates responses to nitric oxide (NO) by catalyzing the biosynthesis of the signaling molecule cGMP. The sequence is that of Guanylate cyclase soluble subunit beta-1 (Gucy1b1) from Mus musculus (Mouse).